Here is a 245-residue protein sequence, read N- to C-terminus: Protein canopy homolog 4 (245 aa).

A signal peptide spans 1–27; that stretch reads MCGLRFIMGPVRLEILLFILAAYGAWA. 3 cysteine pairs are disulfide-bonded: cysteine 44/cysteine 202, cysteine 47/cysteine 190, and cysteine 100/cysteine 162. A disordered region spans residues 207-245; the sequence is WTGKEKISDGQEEADDEEEEEEEEITKTSGNPKHDPEDL. The stretch at 209–237 forms a coiled coil; that stretch reads GKEKISDGQEEADDEEEEEEEEITKTSGN. Over residues 216–230 the composition is skewed to acidic residues; it reads GQEEADDEEEEEEEE.

The protein belongs to the canopy family. As to quaternary structure, interacts with TLR4. In terms of tissue distribution, highly expressed in lung, spleen, thymus, and uterus. Moderately expressed in kidney, stomach and placenta. Weakly expressed in brain, heart, liver, small intestine, skeletal muscle and testis.

It is found in the secreted. Its function is as follows. Plays a role in the regulation of the cell surface expression of TLR4. This is Protein canopy homolog 4 (Cnpy4) from Mus musculus (Mouse).